We begin with the raw amino-acid sequence, 256 residues long: Pyrroloquinoline-quinone synthase (256 aa).

This sequence belongs to the PqqC family.

The enzyme catalyses 6-(2-amino-2-carboxyethyl)-7,8-dioxo-1,2,3,4,7,8-hexahydroquinoline-2,4-dicarboxylate + 3 O2 = pyrroloquinoline quinone + 2 H2O2 + 2 H2O + H(+). Its pathway is cofactor biosynthesis; pyrroloquinoline quinone biosynthesis. Functionally, ring cyclization and eight-electron oxidation of 3a-(2-amino-2-carboxyethyl)-4,5-dioxo-4,5,6,7,8,9-hexahydroquinoline-7,9-dicarboxylic-acid to PQQ. This chain is Pyrroloquinoline-quinone synthase, found in Rhizobium meliloti (strain 1021) (Ensifer meliloti).